Consider the following 280-residue polypeptide: Exfoliative toxin A (280 aa).

The signal sequence occupies residues 1 to 38 (MNNSKIISKVLLSLSLFTVGASAFVIQDELMQKNHAKA). Catalysis depends on charge relay system residues histidine 110, aspartate 158, and serine 233.

It belongs to the peptidase S1B family. Ca(2+) serves as cofactor.

Functionally, has serine protease-like properties and binds to the skin protein profilaggrin. Cleaves substrates after acidic residues. Exfoliative toxins cause impetigous diseases commonly referred as staphylococcal scalded skin syndrome (SSSS). The protein is Exfoliative toxin A (eta) of Staphylococcus aureus.